An 88-amino-acid chain; its full sequence is Stannin (88 aa).

At 1–10 the chain is on the mitochondrial intermembrane side; it reads MSIMDHSPTT. A helical transmembrane segment spans residues 11 to 31; sequence GVVTVIVILIAIAALGALILG. Over 32–88 the chain is Cytoplasmic; sequence CWCYLRLQRISQSEDEESIVGDGETKEPFLLVQYSAKGPCVERKAKLMTPNGPEVHG. At S49 the chain carries Phosphoserine.

Belongs to the stannin family. Monomer.

It is found in the mitochondrion outer membrane. Functionally, plays a role in the toxic effects of organotins. Plays a role in endosomal maturation. This is Stannin (SNN) from Homo sapiens (Human).